A 106-amino-acid polypeptide reads, in one-letter code: ATP-dependent Clp protease adapter protein ClpS (106 aa).

Positions 1–10 are enriched in basic and acidic residues; the sequence is MSQKTVHDQD. Positions 1 to 22 are disordered; the sequence is MSQKTVHDQDNALLLETGNTKV.

Belongs to the ClpS family. In terms of assembly, binds to the N-terminal domain of the chaperone ClpA.

Involved in the modulation of the specificity of the ClpAP-mediated ATP-dependent protein degradation. The chain is ATP-dependent Clp protease adapter protein ClpS from Xylella fastidiosa (strain 9a5c).